We begin with the raw amino-acid sequence, 115 residues long: Double-headed protease inhibitor, submandibular gland (115 aa).

Kazal-like domains are found at residues 6–66 (IGRE…ACDI) and 67–115 (ECTE…HGEC). Cystine bridges form between C12-C46, C24-C43, C32-C64, C68-C97, C75-C94, and C83-C115.

It is found in the secreted. Its function is as follows. This inhibitor is composed of two homologous actively inhibiting halves: one which inhibits trypsin, the other which inhibits elastase. This chain is Double-headed protease inhibitor, submandibular gland, found in Vulpes vulpes (Red fox).